We begin with the raw amino-acid sequence, 530 residues long: White collar 2 protein (530 aa).

Repeat copies occupy residues 9–12, 21–24, 25–28, 29–32, 33–36, 37–40, and 41–44. Residues 9 to 44 form a 7 X 4 AA repeats of G-[SAT]-G-M region; it reads GSSMYGFGAMGMGSGMGSGMGSGMGTGMGTGMGTGM. The disordered stretch occupies residues 134–158; sequence IATPTTTTSGPSGGPSSGGGSTLTE. Over residues 144–154 the composition is skewed to gly residues; it reads PSGGPSSGGGS. Positions 162-232 constitute a PAS domain; the sequence is RRNWPAKVVE…AELNEAIATG (71 aa). Residues 315 to 343 form a disordered region; it reads REEQEEQEESHRTWRMSQEGRSDVTPSDD. A GATA-type zinc finger spans residues 468-493; it reads CTDCGTLDSPEWRKGPSGPKTLCNAC. Positions 504–530 are disordered; that stretch reads KNANNNNNGGGIGGHNDIHTPMGDHMG.

In terms of assembly, heterodimer of wc-1 and wc-2 (Potential). Binds to DNA.

It localises to the nucleus. In terms of biological role, may function as a transcription factor involved in light regulation. Binds and affects blue light regulation of the al-3 gene. Wc-1 and wc-2 interact via homologous PAS domains, bind to promoters of light regulated genes such as frq, and activate transcription. May bind directly to frq. This is White collar 2 protein (wc-2) from Neurospora crassa (strain ATCC 24698 / 74-OR23-1A / CBS 708.71 / DSM 1257 / FGSC 987).